We begin with the raw amino-acid sequence, 260 residues long: Translation initiation factor 2 subunit alpha (260 aa).

In terms of domain architecture, S1 motif spans 12-83 (GDLIVGTVHK…KKGHVDASLK (72 aa)).

This sequence belongs to the eIF-2-alpha family. In terms of assembly, heterotrimer composed of an alpha, a beta and a gamma chain.

Functionally, eIF-2 functions in the early steps of protein synthesis by forming a ternary complex with GTP and initiator tRNA. This is Translation initiation factor 2 subunit alpha from Methanosphaera stadtmanae (strain ATCC 43021 / DSM 3091 / JCM 11832 / MCB-3).